Consider the following 237-residue polypeptide: Ribosomal RNA small subunit methyltransferase G (237 aa).

Residues Gly-78, Phe-83, 129–130 (AE), and Arg-148 each bind S-adenosyl-L-methionine. Residues 218-237 (KKETPRKYPRKAGTPNKKPL) form a disordered region.

This sequence belongs to the methyltransferase superfamily. RNA methyltransferase RsmG family.

The protein resides in the cytoplasm. Functionally, specifically methylates the N7 position of a guanine in 16S rRNA. The chain is Ribosomal RNA small subunit methyltransferase G from Streptococcus uberis (strain ATCC BAA-854 / 0140J).